The chain runs to 372 residues: Phospho-N-acetylmuramoyl-pentapeptide-transferase (372 aa).

The next 10 membrane-spanning stretches (helical) occupy residues Arg-25–Ile-45, Thr-73–Leu-93, Val-98–Ile-118, Phe-134–Gln-154, Ser-176–Ile-196, Gly-211–Ser-231, Leu-251–His-271, Val-275–Met-295, Ile-300–Ile-320, and Gln-349–Leu-369.

Belongs to the glycosyltransferase 4 family. MraY subfamily. Requires Mg(2+) as cofactor.

It is found in the cell inner membrane. It carries out the reaction UDP-N-acetyl-alpha-D-muramoyl-L-alanyl-gamma-D-glutamyl-meso-2,6-diaminopimeloyl-D-alanyl-D-alanine + di-trans,octa-cis-undecaprenyl phosphate = di-trans,octa-cis-undecaprenyl diphospho-N-acetyl-alpha-D-muramoyl-L-alanyl-D-glutamyl-meso-2,6-diaminopimeloyl-D-alanyl-D-alanine + UMP. It participates in cell wall biogenesis; peptidoglycan biosynthesis. Functionally, catalyzes the initial step of the lipid cycle reactions in the biosynthesis of the cell wall peptidoglycan: transfers peptidoglycan precursor phospho-MurNAc-pentapeptide from UDP-MurNAc-pentapeptide onto the lipid carrier undecaprenyl phosphate, yielding undecaprenyl-pyrophosphoryl-MurNAc-pentapeptide, known as lipid I. The polypeptide is Phospho-N-acetylmuramoyl-pentapeptide-transferase (Acinetobacter baumannii (strain AB0057)).